We begin with the raw amino-acid sequence, 327 residues long: tRNA dimethylallyltransferase (327 aa).

14–21 (GPTASGKT) serves as a coordination point for ATP. Residue 16–21 (TASGKT) coordinates substrate. 2 interaction with substrate tRNA regions span residues 39 to 42 (DSAL) and 163 to 167 (QRIQR).

The protein belongs to the IPP transferase family. In terms of assembly, monomer. Mg(2+) serves as cofactor.

It catalyses the reaction adenosine(37) in tRNA + dimethylallyl diphosphate = N(6)-dimethylallyladenosine(37) in tRNA + diphosphate. Catalyzes the transfer of a dimethylallyl group onto the adenine at position 37 in tRNAs that read codons beginning with uridine, leading to the formation of N6-(dimethylallyl)adenosine (i(6)A). This chain is tRNA dimethylallyltransferase, found in Xanthomonas campestris pv. campestris (strain 8004).